Here is a 206-residue protein sequence, read N- to C-terminus: Thiamine-phosphate synthase (206 aa).

4-amino-2-methyl-5-(diphosphooxymethyl)pyrimidine-binding positions include 35-39 (QLRHK) and Asn-67. Mg(2+)-binding residues include Asp-68 and Asp-87. Residue Ser-106 participates in 4-amino-2-methyl-5-(diphosphooxymethyl)pyrimidine binding. Residue 132–134 (TGS) participates in 2-[(2R,5Z)-2-carboxy-4-methylthiazol-5(2H)-ylidene]ethyl phosphate binding. Lys-135 serves as a coordination point for 4-amino-2-methyl-5-(diphosphooxymethyl)pyrimidine. Gly-163 is a 2-[(2R,5Z)-2-carboxy-4-methylthiazol-5(2H)-ylidene]ethyl phosphate binding site.

The protein belongs to the thiamine-phosphate synthase family. Requires Mg(2+) as cofactor.

The enzyme catalyses 2-[(2R,5Z)-2-carboxy-4-methylthiazol-5(2H)-ylidene]ethyl phosphate + 4-amino-2-methyl-5-(diphosphooxymethyl)pyrimidine + 2 H(+) = thiamine phosphate + CO2 + diphosphate. It catalyses the reaction 2-(2-carboxy-4-methylthiazol-5-yl)ethyl phosphate + 4-amino-2-methyl-5-(diphosphooxymethyl)pyrimidine + 2 H(+) = thiamine phosphate + CO2 + diphosphate. The catalysed reaction is 4-methyl-5-(2-phosphooxyethyl)-thiazole + 4-amino-2-methyl-5-(diphosphooxymethyl)pyrimidine + H(+) = thiamine phosphate + diphosphate. Its pathway is cofactor biosynthesis; thiamine diphosphate biosynthesis; thiamine phosphate from 4-amino-2-methyl-5-diphosphomethylpyrimidine and 4-methyl-5-(2-phosphoethyl)-thiazole: step 1/1. Condenses 4-methyl-5-(beta-hydroxyethyl)thiazole monophosphate (THZ-P) and 2-methyl-4-amino-5-hydroxymethyl pyrimidine pyrophosphate (HMP-PP) to form thiamine monophosphate (TMP). The chain is Thiamine-phosphate synthase from Chlorobium phaeobacteroides (strain DSM 266 / SMG 266 / 2430).